A 525-amino-acid chain; its full sequence is NAD(P)H-quinone oxidoreductase subunit 2 (525 aa).

The next 14 membrane-spanning stretches (helical) occupy residues 14-34 (AIWPEVVVTLTLLIVLVVDLV), 42-62 (SLPALSLFGLLGALVTLVLQW), 78-98 (PVSILFRGLVVATAALTVMMA), 117-137 (LTATLGGMFLAGATDLIMVFV), 167-187 (LLTGASSTAIFLYGMSLLYGL), 201-221 (LANAGLVGILALVFCLGGIGF), 240-260 (PTPVVAFLSVGSKAAGFALAI), 276-296 (AVLSVLAILTMVLGNVVAIAQ), 302-322 (LLAYSSIGQAGFVLIGLVAGT), 330-350 (IFYLMVYLAMNLGAFLCVTLF), 374-394 (LCLSICLLSLGGLPPLAGFFG), 396-416 (LYLFWAGWQAGEYTLVLVGLV), 462-482 (VGMVVTLVATIFAGILSNPLF), and 494-514 (FLGFPTAQAFAPGSASPSLAV).

Belongs to the complex I subunit 2 family. NDH-1 can be composed of about 15 different subunits; different subcomplexes with different compositions have been identified which probably have different functions.

It localises to the cellular thylakoid membrane. It catalyses the reaction a plastoquinone + NADH + (n+1) H(+)(in) = a plastoquinol + NAD(+) + n H(+)(out). The catalysed reaction is a plastoquinone + NADPH + (n+1) H(+)(in) = a plastoquinol + NADP(+) + n H(+)(out). NDH-1 shuttles electrons from an unknown electron donor, via FMN and iron-sulfur (Fe-S) centers, to quinones in the respiratory and/or the photosynthetic chain. The immediate electron acceptor for the enzyme in this species is believed to be plastoquinone. Couples the redox reaction to proton translocation, and thus conserves the redox energy in a proton gradient. Cyanobacterial NDH-1 also plays a role in inorganic carbon-concentration. The sequence is that of NAD(P)H-quinone oxidoreductase subunit 2 from Synechococcus sp. (strain JA-3-3Ab) (Cyanobacteria bacterium Yellowstone A-Prime).